A 328-amino-acid polypeptide reads, in one-letter code: Alanine racemase (328 aa).

Lysine 33 serves as the catalytic Proton acceptor; specific for D-alanine. N6-(pyridoxal phosphate)lysine is present on lysine 33. Residue arginine 118 participates in substrate binding. Tyrosine 237 serves as the catalytic Proton acceptor; specific for L-alanine. Methionine 283 serves as a coordination point for substrate.

It belongs to the alanine racemase family. It depends on pyridoxal 5'-phosphate as a cofactor.

It carries out the reaction L-alanine = D-alanine. It functions in the pathway amino-acid biosynthesis; D-alanine biosynthesis; D-alanine from L-alanine: step 1/1. Functionally, catalyzes the interconversion of L-alanine and D-alanine. May also act on other amino acids. The chain is Alanine racemase (alr) from Campylobacter jejuni (strain RM1221).